The chain runs to 773 residues: Subtilisin-like protease SBT3.4 (773 aa).

Positions 1–23 (MRNFRSSVLVVLSLIIVLNVARA) are cleaved as a signal peptide. Positions 24 to 108 (SAKSKVHIVY…VIPDSYYELA (85 aa)) are cleaved as a propeptide — activation peptide. Positions 29–108 (VHIVYLGEKQ…VIPDSYYELA (80 aa)) constitute an Inhibitor I9 domain. Residues 112–620 (IWDYLGPSAD…GGLVNPEKAA (509 aa)) enclose the Peptidase S8 domain. Asp142 functions as the Charge relay system in the catalytic mechanism. Asn200 carries an N-linked (GlcNAc...) asparagine glycan. The Charge relay system role is filled by His216. Asn231, Asn408, and Asn536 each carry an N-linked (GlcNAc...) asparagine glycan. The PA domain occupies 382–474 (SLVYPEDPGN…IDNELGTDIL (93 aa)). Catalysis depends on Ser551, which acts as the Charge relay system. Asn643 carries N-linked (GlcNAc...) asparagine glycosylation.

This sequence belongs to the peptidase S8 family.

Its subcellular location is the secreted. The sequence is that of Subtilisin-like protease SBT3.4 from Arabidopsis thaliana (Mouse-ear cress).